The chain runs to 874 residues: Alanine--tRNA ligase (874 aa).

Positions 564, 568, 665, and 669 each coordinate Zn(2+).

This sequence belongs to the class-II aminoacyl-tRNA synthetase family. Requires Zn(2+) as cofactor.

Its subcellular location is the cytoplasm. The catalysed reaction is tRNA(Ala) + L-alanine + ATP = L-alanyl-tRNA(Ala) + AMP + diphosphate. In terms of biological role, catalyzes the attachment of alanine to tRNA(Ala) in a two-step reaction: alanine is first activated by ATP to form Ala-AMP and then transferred to the acceptor end of tRNA(Ala). Also edits incorrectly charged Ser-tRNA(Ala) and Gly-tRNA(Ala) via its editing domain. This is Alanine--tRNA ligase from Burkholderia mallei (strain ATCC 23344).